The chain runs to 104 residues: DNA-directed RNA polymerase subunit omega (104 aa).

This sequence belongs to the RNA polymerase subunit omega family. In terms of assembly, the RNAP catalytic core consists of 2 alpha, 1 beta, 1 beta' and 1 omega subunit. When a sigma factor is associated with the core the holoenzyme is formed, which can initiate transcription.

The catalysed reaction is RNA(n) + a ribonucleoside 5'-triphosphate = RNA(n+1) + diphosphate. Promotes RNA polymerase assembly. Latches the N- and C-terminal regions of the beta' subunit thereby facilitating its interaction with the beta and alpha subunits. The chain is DNA-directed RNA polymerase subunit omega from Streptococcus agalactiae serotype Ia (strain ATCC 27591 / A909 / CDC SS700).